The sequence spans 771 residues: Solute carrier family 7 member 14 (771 aa).

6 helical membrane-spanning segments follow: residues 58 to 78, 83 to 103, 119 to 141, 187 to 207, 216 to 236, and 251 to 271; these read LISL…SGLV, AGPG…LSGV, AYTY…NLIL, YPDL…ALGV, VLNV…LFFI, and WSGV…FDII. N-linked (GlcNAc...) asparagine glycosylation occurs at Asn282. 5 helical membrane-spanning segments follow: residues 291–311, 336–356, 360–380, 384–404, and 407–427; these read ASLV…TLMV, FVVA…SLFP, VIYA…VSSY, PVVA…LVSL, and LIEM…VCVL. A phosphoserine mark is found at Ser465, Ser468, and Ser488. Transmembrane regions (helical) follow at residues 565 to 585, 596 to 616, 628 to 648, and 655 to 675; these read VTIC…FIIF, WAIL…FVIL, MAPC…YLML, and WIRF…YGIW. Residue Asn676 is glycosylated (N-linked (GlcNAc...) asparagine). Residues 736 to 771 are disordered; that stretch reads DAKANGRTSSKAKSKSKHKQNSEALIANDELDYSPE. Over residues 745–754 the composition is skewed to basic residues; sequence SKAKSKSKHK. A phosphoserine mark is found at Ser757 and Ser769.

This sequence belongs to the amino acid-polyamine-organocation (APC) superfamily. Cationic amino acid transporter (CAT) (TC 2.A.3.3) family. As to expression, expressed in skin fibroblasts.

It is found in the lysosome membrane. It carries out the reaction 4-aminobutanoate(in) = 4-aminobutanoate(out). Functionally, imports 4-aminobutanoate (GABA) into lysosomes. May act as a GABA sensor that regulates mTORC2-dependent INS signaling and gluconeogenesis. The transport mechanism and substrate selectivity remain to be elucidated. This chain is Solute carrier family 7 member 14, found in Homo sapiens (Human).